A 91-amino-acid chain; its full sequence is Small ribosomal subunit protein uS19 (91 aa).

The protein belongs to the universal ribosomal protein uS19 family.

In terms of biological role, protein S19 forms a complex with S13 that binds strongly to the 16S ribosomal RNA. This chain is Small ribosomal subunit protein uS19, found in Prochlorococcus marinus (strain MIT 9211).